A 631-amino-acid chain; its full sequence is tRNA 5-methylaminomethyl-2-thiouridine biosynthesis bifunctional protein MnmC (631 aa).

The tRNA (mnm(5)s(2)U34)-methyltransferase stretch occupies residues 1–243 (MITDLRPPAM…KREMLTGRLP (243 aa)). An FAD-dependent cmnm(5)s(2)U34 oxidoreductase region spans residues 261-631 (IGAGIAGAAL…GRLYRNQLTV (371 aa)).

This sequence in the N-terminal section; belongs to the methyltransferase superfamily. tRNA (mnm(5)s(2)U34)-methyltransferase family. It in the C-terminal section; belongs to the DAO family. The cofactor is FAD.

Its subcellular location is the cytoplasm. The catalysed reaction is 5-aminomethyl-2-thiouridine(34) in tRNA + S-adenosyl-L-methionine = 5-methylaminomethyl-2-thiouridine(34) in tRNA + S-adenosyl-L-homocysteine + H(+). Its function is as follows. Catalyzes the last two steps in the biosynthesis of 5-methylaminomethyl-2-thiouridine (mnm(5)s(2)U) at the wobble position (U34) in tRNA. Catalyzes the FAD-dependent demodification of cmnm(5)s(2)U34 to nm(5)s(2)U34, followed by the transfer of a methyl group from S-adenosyl-L-methionine to nm(5)s(2)U34, to form mnm(5)s(2)U34. In Marinobacter nauticus (strain ATCC 700491 / DSM 11845 / VT8) (Marinobacter aquaeolei), this protein is tRNA 5-methylaminomethyl-2-thiouridine biosynthesis bifunctional protein MnmC.